The primary structure comprises 430 residues: Glutamate-1-semialdehyde 2,1-aminomutase (430 aa).

Lysine 267 is modified (N6-(pyridoxal phosphate)lysine).

The protein belongs to the class-III pyridoxal-phosphate-dependent aminotransferase family. HemL subfamily. As to quaternary structure, homodimer. Pyridoxal 5'-phosphate is required as a cofactor.

Its subcellular location is the cytoplasm. The enzyme catalyses (S)-4-amino-5-oxopentanoate = 5-aminolevulinate. It functions in the pathway porphyrin-containing compound metabolism; protoporphyrin-IX biosynthesis; 5-aminolevulinate from L-glutamyl-tRNA(Glu): step 2/2. The chain is Glutamate-1-semialdehyde 2,1-aminomutase from Sulfurovum sp. (strain NBC37-1).